Consider the following 258-residue polypeptide: Imidazole glycerol phosphate synthase subunit HisF (258 aa).

Residues D11 and D130 contribute to the active site.

The protein belongs to the HisA/HisF family. In terms of assembly, heterodimer of HisH and HisF.

It localises to the cytoplasm. It carries out the reaction 5-[(5-phospho-1-deoxy-D-ribulos-1-ylimino)methylamino]-1-(5-phospho-beta-D-ribosyl)imidazole-4-carboxamide + L-glutamine = D-erythro-1-(imidazol-4-yl)glycerol 3-phosphate + 5-amino-1-(5-phospho-beta-D-ribosyl)imidazole-4-carboxamide + L-glutamate + H(+). Its pathway is amino-acid biosynthesis; L-histidine biosynthesis; L-histidine from 5-phospho-alpha-D-ribose 1-diphosphate: step 5/9. In terms of biological role, IGPS catalyzes the conversion of PRFAR and glutamine to IGP, AICAR and glutamate. The HisF subunit catalyzes the cyclization activity that produces IGP and AICAR from PRFAR using the ammonia provided by the HisH subunit. The chain is Imidazole glycerol phosphate synthase subunit HisF from Yersinia pseudotuberculosis serotype O:1b (strain IP 31758).